Reading from the N-terminus, the 119-residue chain is Fluoride-specific ion channel FluC 1 (119 aa).

A run of 4 helical transmembrane segments spans residues 2–22 (TGAV…GAVL), 37–57 (AGTL…TFAA), 62–82 (TMLL…SFSV), and 99–119 (HALG…LLVA). Na(+) is bound by residues G72 and T75.

This sequence belongs to the fluoride channel Fluc/FEX (TC 1.A.43) family.

Its subcellular location is the cell membrane. The catalysed reaction is fluoride(in) = fluoride(out). Its activity is regulated as follows. Na(+) is not transported, but it plays an essential structural role and its presence is essential for fluoride channel function. Functionally, fluoride-specific ion channel. Important for reducing fluoride concentration in the cell, thus reducing its toxicity. In Halobacterium salinarum (strain ATCC 700922 / JCM 11081 / NRC-1) (Halobacterium halobium), this protein is Fluoride-specific ion channel FluC 1.